Here is a 536-residue protein sequence, read N- to C-terminus: Phosphoenolpyruvate carboxykinase (ATP) (536 aa).

Residues arginine 61, tyrosine 195, and lysine 201 each contribute to the substrate site. Residues lysine 201, histidine 220, and 236 to 244 contribute to the ATP site; that span reads GLSGTGKTT. Lysine 201 and histidine 220 together coordinate Mn(2+). Aspartate 257 serves as a coordination point for Mn(2+). ATP-binding residues include glutamate 285, arginine 322, and threonine 447. Residue arginine 322 coordinates substrate.

This sequence belongs to the phosphoenolpyruvate carboxykinase (ATP) family. Mn(2+) serves as cofactor.

The protein localises to the cytoplasm. It catalyses the reaction oxaloacetate + ATP = phosphoenolpyruvate + ADP + CO2. It functions in the pathway carbohydrate biosynthesis; gluconeogenesis. Functionally, involved in the gluconeogenesis. Catalyzes the conversion of oxaloacetate (OAA) to phosphoenolpyruvate (PEP) through direct phosphoryl transfer between the nucleoside triphosphate and OAA. The sequence is that of Phosphoenolpyruvate carboxykinase (ATP) from Brucella melitensis biotype 1 (strain ATCC 23456 / CCUG 17765 / NCTC 10094 / 16M).